A 552-amino-acid polypeptide reads, in one-letter code: Urocanate hydratase (552 aa).

NAD(+) contacts are provided by residues 49–50 (GG), glutamine 127, 173–175 (GMG), glutamate 193, arginine 198, 239–240 (NA), 260–264 (QTSAH), 270–271 (YI), and tyrosine 319. Residue cysteine 407 is part of the active site. NAD(+) is bound at residue glycine 489.

Belongs to the urocanase family. NAD(+) is required as a cofactor.

Its subcellular location is the cytoplasm. It catalyses the reaction 4-imidazolone-5-propanoate = trans-urocanate + H2O. It participates in amino-acid degradation; L-histidine degradation into L-glutamate; N-formimidoyl-L-glutamate from L-histidine: step 2/3. In terms of biological role, catalyzes the conversion of urocanate to 4-imidazolone-5-propionate. This chain is Urocanate hydratase, found in Geobacillus sp. (strain WCH70).